Consider the following 659-residue polypeptide: MFS-type transporter phiD (659 aa).

2 disordered regions span residues 1–42 and 76–127; these read MGED…SWRV and DLTV…IGKQ. The segment covering 93–109 has biased composition (basic and acidic residues); it reads SIEKSKEDGDADDKRQS. A helical membrane pass occupies residues 144 to 164; it reads LIVLAASLAGFFSPLSASIYY. A glycan (N-linked (GlcNAc...) asparagine) is linked at asparagine 182. The next 5 membrane-spanning stretches (helical) occupy residues 183 to 203, 210 to 230, 235 to 257, 269 to 289, and 299 to 319; these read LTVT…AGFS, PAYA…ALQN, LMVL…NGVV, FIAF…VIGG, and WIFW…FLFF. N-linked (GlcNAc...) asparagine glycosylation occurs at asparagine 338. A run of 6 helical transmembrane segments spans residues 385–405, 422–442, 475–495, 502–522, 549–569, and 572–592; these read AMIL…LTGA, LMYI…GKLV, LEVG…YGWI, VWGP…FFQV, LGAA…EGWA, and IVAM…VNGI. 2 stretches are compositionally biased toward basic and acidic residues: residues 605 to 634 and 641 to 651; these read KKAG…QKAE and DLEKQDRKDSQ. The tract at residues 605-659 is disordered; that stretch reads KKAGREAKIEAEKRAREEIETKKEAKQKAEEDVEIGDLEKQDRKDSQRPTSSKAT.

This sequence belongs to the major facilitator superfamily.

Its subcellular location is the membrane. Functionally, MFS-type transporter; part of the gene cluster that mediates the biosynthesis of the antihypercholesterolemic agents phomoidrides which are dimeric anhydrides. This chain is MFS-type transporter phiD, found in Fungal sp. (strain ATCC 74256).